The chain runs to 252 residues: Pyrroloquinoline-quinone synthase (252 aa).

It belongs to the PqqC family.

The catalysed reaction is 6-(2-amino-2-carboxyethyl)-7,8-dioxo-1,2,3,4,7,8-hexahydroquinoline-2,4-dicarboxylate + 3 O2 = pyrroloquinoline quinone + 2 H2O2 + 2 H2O + H(+). Its pathway is cofactor biosynthesis; pyrroloquinoline quinone biosynthesis. Functionally, ring cyclization and eight-electron oxidation of 3a-(2-amino-2-carboxyethyl)-4,5-dioxo-4,5,6,7,8,9-hexahydroquinoline-7,9-dicarboxylic-acid to PQQ. The chain is Pyrroloquinoline-quinone synthase from Acinetobacter baumannii (strain AB307-0294).